Here is a 332-residue protein sequence, read N- to C-terminus: Holliday junction branch migration complex subunit RuvB (332 aa).

The segment at 1-181 (MARILDNNVM…FGITGHMEYY (181 aa)) is large ATPase domain (RuvB-L). ATP contacts are provided by residues Leu20, Arg21, Gly62, Lys65, Thr66, Thr67, 128–130 (EDF), Arg171, Tyr181, and Arg218. Thr66 contributes to the Mg(2+) binding site. Residues 182–252 (QEKDLTEIVE…ITDRALTMLD (71 aa)) form a small ATPAse domain (RuvB-S) region. The head domain (RuvB-H) stretch occupies residues 255–332 (REGLNYIDQK…RHLGYPYQNT (78 aa)). Positions 291, 310, 312, and 315 each coordinate DNA.

This sequence belongs to the RuvB family. Homohexamer. Forms an RuvA(8)-RuvB(12)-Holliday junction (HJ) complex. HJ DNA is sandwiched between 2 RuvA tetramers; dsDNA enters through RuvA and exits via RuvB. An RuvB hexamer assembles on each DNA strand where it exits the tetramer. Each RuvB hexamer is contacted by two RuvA subunits (via domain III) on 2 adjacent RuvB subunits; this complex drives branch migration. In the full resolvosome a probable DNA-RuvA(4)-RuvB(12)-RuvC(2) complex forms which resolves the HJ.

It is found in the cytoplasm. The catalysed reaction is ATP + H2O = ADP + phosphate + H(+). Functionally, the RuvA-RuvB-RuvC complex processes Holliday junction (HJ) DNA during genetic recombination and DNA repair, while the RuvA-RuvB complex plays an important role in the rescue of blocked DNA replication forks via replication fork reversal (RFR). RuvA specifically binds to HJ cruciform DNA, conferring on it an open structure. The RuvB hexamer acts as an ATP-dependent pump, pulling dsDNA into and through the RuvAB complex. RuvB forms 2 homohexamers on either side of HJ DNA bound by 1 or 2 RuvA tetramers; 4 subunits per hexamer contact DNA at a time. Coordinated motions by a converter formed by DNA-disengaged RuvB subunits stimulates ATP hydrolysis and nucleotide exchange. Immobilization of the converter enables RuvB to convert the ATP-contained energy into a lever motion, pulling 2 nucleotides of DNA out of the RuvA tetramer per ATP hydrolyzed, thus driving DNA branch migration. The RuvB motors rotate together with the DNA substrate, which together with the progressing nucleotide cycle form the mechanistic basis for DNA recombination by continuous HJ branch migration. Branch migration allows RuvC to scan DNA until it finds its consensus sequence, where it cleaves and resolves cruciform DNA. This Streptococcus pyogenes serotype M18 (strain MGAS8232) protein is Holliday junction branch migration complex subunit RuvB.